A 165-amino-acid polypeptide reads, in one-letter code: Protein SEED AND ROOT HAIR PROTECTIVE PROTEIN (165 aa).

Positions 1-24 (MAFSRLSFAASLIVFSSLIISSVA) are cleaved as a signal peptide.

The protein belongs to the plant proline-rich protein superfamily. As to expression, root hair and seed specific expression. Also observed in other tissues including siliques, roots and flowers.

It localises to the secreted. The protein localises to the cell wall. Contributes to cell wall structure in root hairs and seeds, especially in phosphate (Pi) deprivation conditions or in the presence of ethylene. Particularly important in maternal tissues (pericarps and seed coats) during seed development, especially under stress conditions. Confers thermotolerance in seed germination rate. The protein is Protein SEED AND ROOT HAIR PROTECTIVE PROTEIN of Arabidopsis thaliana (Mouse-ear cress).